Reading from the N-terminus, the 345-residue chain is Myb/SANT-like DNA-binding domain-containing protein 4 (345 aa).

The Myb-like domain maps to L4–R77. K9 is covalently cross-linked (Glycyl lysine isopeptide (Lys-Gly) (interchain with G-Cter in SUMO2)). A Phosphoserine modification is found at S106. Glycyl lysine isopeptide (Lys-Gly) (interchain with G-Cter in SUMO2) cross-links involve residues K114 and K142. The interval V141 to E160 is disordered. The residue at position 188 (T188) is a Phosphothreonine. Residues L203 to Q345 are a coiled coil. Residues K237, K254, and K273 each participate in a glycyl lysine isopeptide (Lys-Gly) (interchain with G-Cter in SUMO2) cross-link.

The polypeptide is Myb/SANT-like DNA-binding domain-containing protein 4 (MSANTD4) (Bos taurus (Bovine)).